Reading from the N-terminus, the 375-residue chain is CD2 homolog (375 aa).

The N-terminal stretch at M1 to S16 is a signal peptide. Residues I17–Y207 are Extracellular-facing. N-linked (GlcNAc...) asparagine; by host glycosylation is found at N24, N80, N105, N122, N134, N145, N168, N176, and N183. 2 disulfide bridges follow: C123–C190 and C130–C173. Residues M208 to I228 traverse the membrane as a helical segment. Over T229–I375 the chain is Cytoplasmic. Residues E242 to P278 form a disordered region. Over residues Q256–P270 the composition is skewed to basic and acidic residues. Repeat copies occupy residues K305 to P310, K311 to P316, K317 to P322, K323 to P328, and K329 to S334. The 5 X 6 AA tandem repeats of K-[LP]-C-[PRS]-[PS]-[PS] stretch occupies residues K305 to S334. The segment at K323–P350 is disordered. Residues P332–P346 show a composition bias toward low complexity.

It belongs to the asfivirus CD2 homolog protein family. In terms of assembly, both glycosylated and nonglycosylated forms interact (via C-terminus) with the host AP-1 complex. Post-translationally, cleaved into two fragments of 63 kDa and 26 kDa containing respectively the glycosylated N-terminus and the nonglycosylated C-terminus. A full-length 89-kDa glycosylated form also exists.

The protein localises to the host membrane. Its subcellular location is the virion membrane. It is found in the host Golgi apparatus. Functionally, may play an immunosuppressive role by inhibiting lymphocyte proliferation and subsequently facilitating viral replication and generalization of infection. Responsible for viral hemadsorption, which may help viral spread. Increases virus replication in the tick vector at the step of virus uptake or replication in the tick gut. May play a role in the host Golgi reorganization to yield viral factories. May play a role in host cell penetration. The polypeptide is CD2 homolog (Ornithodoros (relapsing fever ticks)).